The following is a 122-amino-acid chain: MARIAGVDLPRGKRVDIALTYIYGIGRATALQILDATGVNWTRNVDDLNADEVNEIRKEIEQNHKVEGDLRREISANIKRLMDIGCYRGLRHRRGLPVRGQRTHTNARTRKGPRRGTVGKKK.

The disordered stretch occupies residues 95–122 (GLPVRGQRTHTNARTRKGPRRGTVGKKK).

It belongs to the universal ribosomal protein uS13 family. Part of the 30S ribosomal subunit. Forms a loose heterodimer with protein S19. Forms two bridges to the 50S subunit in the 70S ribosome.

Its function is as follows. Located at the top of the head of the 30S subunit, it contacts several helices of the 16S rRNA. In the 70S ribosome it contacts the 23S rRNA (bridge B1a) and protein L5 of the 50S subunit (bridge B1b), connecting the 2 subunits; these bridges are implicated in subunit movement. Contacts the tRNAs in the A and P-sites. In Nitratidesulfovibrio vulgaris (strain ATCC 29579 / DSM 644 / CCUG 34227 / NCIMB 8303 / VKM B-1760 / Hildenborough) (Desulfovibrio vulgaris), this protein is Small ribosomal subunit protein uS13.